A 602-amino-acid chain; its full sequence is Sodium- and chloride-dependent GABA transporter 2 (602 aa).

The Cytoplasmic portion of the chain corresponds to 1–40; it reads MENRASGTTSNGETKPVCPAMEKVEEDGTLEREHWNNKME. The next 3 membrane-spanning stretches (helical) occupy residues 41–61, 68–88, and 121–141; these read FVLS…FPYL, GAFF…VFFL, and IVSL…FYLF. Residues 142-206 lie on the Extracellular side of the membrane; that stretch reads SSFTTDLPWG…GIQHLGSLRW (65 aa). Cys-153 and Cys-162 are disulfide-bonded. Asn-169, Asn-173, and Asn-178 each carry an N-linked (GlcNAc...) asparagine glycan. The next 2 membrane-spanning stretches (helical) occupy residues 207-227 and 233-253; these read ELVL…WKGV and VVYF…IRGV. N-linked (GlcNAc...) asparagine glycosylation is present at Asn-269. 7 helical membrane-spanning segments follow: residues 282–302, 319–339, 366–386, 418–438, 453–473, 490–510, and 528–548; these read AGTQ…ALGS, ILNS…LGFM, VVML…VVLL, VLIL…LTEG, GMCL…VYGA, PLIK…TFLF, and WWGD…IPAW. The Cytoplasmic portion of the chain corresponds to 549 to 602; sequence SIYKLRTLKGPLRERLRQLVCPAEDLPQKNQPEPTAPATPMTSLLRLTELESNC. Phosphothreonine is present on Thr-587. Ser-591 carries the post-translational modification Phosphoserine.

The protein belongs to the sodium:neurotransmitter symporter (SNF) (TC 2.A.22) family. SLC6A13 subfamily. Expressed at high levels in liver, followed by kidney and leptomeninges, and very low levels in the cerebellum (at protein level). In the brain, detected in some blood vessels (at protein level). In the kidney, expressed in the cortex, including parts of the proximal tubules, but not in the medulla (at protein level). In the liver, highest expression in periportal hepatocytes, with highest density at the vascular side (at protein level). Also detected at low levels in other organs, including skeletal muscle.

The protein localises to the cell membrane. Its subcellular location is the basolateral cell membrane. It catalyses the reaction 4-aminobutanoate(out) + chloride(out) + 2 Na(+)(out) = 4-aminobutanoate(in) + chloride(in) + 2 Na(+)(in). It carries out the reaction taurine(out) + chloride(out) + 2 Na(+)(out) = taurine(in) + chloride(in) + 2 Na(+)(in). The catalysed reaction is beta-alanine(out) + chloride(out) + 2 Na(+)(out) = beta-alanine(in) + chloride(in) + 2 Na(+)(in). The enzyme catalyses hypotaurine(out) + chloride(out) + 2 Na(+)(out) = hypotaurine(in) + chloride(in) + 2 Na(+)(in). With respect to regulation, gamma-aminobutyric acid (GABA) transport is inhibited by beta-alanine, taurine, hypotaurine, beta-guanidinopropionic acid, 2,3-diaminopropionic acid, guvacine and nipecotic acid. Beta-alanine transport is inhibited by GABA. Taurine transport is inhibited by GABA, beta-alanine, SNAP-5114, nigericin, nipecotic acid and ouabain. Functionally, mediates sodium- and chloride-dependent transport of gamma-aminobutyric acid (GABA). Can also mediate transport of beta-alanine, taurine and hypotaurine and is the major taurine transporter in hepatocytes. This Mus musculus (Mouse) protein is Sodium- and chloride-dependent GABA transporter 2 (Slc6a13).